Reading from the N-terminus, the 317-residue chain is Ribonuclease Z (317 aa).

Zn(2+)-binding residues include His-63, His-65, Asp-67, His-68, His-143, Asp-213, and His-273. Asp-67 acts as the Proton acceptor in catalysis.

The protein belongs to the RNase Z family. In terms of assembly, homodimer. Requires Zn(2+) as cofactor.

The enzyme catalyses Endonucleolytic cleavage of RNA, removing extra 3' nucleotides from tRNA precursor, generating 3' termini of tRNAs. A 3'-hydroxy group is left at the tRNA terminus and a 5'-phosphoryl group is left at the trailer molecule.. In terms of biological role, zinc phosphodiesterase, which displays some tRNA 3'-processing endonuclease activity. Probably involved in tRNA maturation, by removing a 3'-trailer from precursor tRNA. The polypeptide is Ribonuclease Z (Methanocaldococcus jannaschii (strain ATCC 43067 / DSM 2661 / JAL-1 / JCM 10045 / NBRC 100440) (Methanococcus jannaschii)).